The following is a 162-amino-acid chain: Ribosome maturation factor RimM (162 aa).

The PRC barrel domain occupies 86-160; that stretch reads EGRYYYFALI…SIHVDPIPGL (75 aa).

It belongs to the RimM family. As to quaternary structure, binds ribosomal protein uS19.

It localises to the cytoplasm. Functionally, an accessory protein needed during the final step in the assembly of 30S ribosomal subunit, possibly for assembly of the head region. Essential for efficient processing of 16S rRNA. May be needed both before and after RbfA during the maturation of 16S rRNA. It has affinity for free ribosomal 30S subunits but not for 70S ribosomes. In Thermus thermophilus (strain ATCC 27634 / DSM 579 / HB8), this protein is Ribosome maturation factor RimM.